Reading from the N-terminus, the 137-residue chain is Small ribosomal subunit protein uS12 (137 aa).

Positions 1 to 57 (MPTINQLVRKPRKSKVEKPKSPALNVGYNSHKKVQTNVSSPQKRGVATRVGTMTPRK) are disordered. A 3-methylthioaspartic acid modification is found at Asp102.

This sequence belongs to the universal ribosomal protein uS12 family. Part of the 30S ribosomal subunit. Contacts proteins S8 and S17. May interact with IF1 in the 30S initiation complex.

Its function is as follows. With S4 and S5 plays an important role in translational accuracy. Interacts with and stabilizes bases of the 16S rRNA that are involved in tRNA selection in the A site and with the mRNA backbone. Located at the interface of the 30S and 50S subunits, it traverses the body of the 30S subunit contacting proteins on the other side and probably holding the rRNA structure together. The combined cluster of proteins S8, S12 and S17 appears to hold together the shoulder and platform of the 30S subunit. The protein is Small ribosomal subunit protein uS12 of Streptococcus pneumoniae (strain Hungary19A-6).